The following is a 341-amino-acid chain: Mitochondrial ubiquitin ligase activator of nfkb 1-A (341 aa).

The Cytoplasmic portion of the chain corresponds to 1–5 (MEDFP). The chain crosses the membrane as a helical span at residues 6 to 26 (VLEMVCLGSSVALSGLFYYIY). The Mitochondrial intermembrane portion of the chain corresponds to 27 to 233 (RKKRKTVDKL…LLMEQEGQAE (207 aa)). A helical membrane pass occupies residues 234-254 (VWRVFACICALAGVAVLIWTG). Over 255 to 341 (RRYYRQLKLR…IKRVVPLYQA (87 aa)) the chain is Cytoplasmic. An RING-type zinc finger spans residues 292–329 (CVICLSNPRGCVLLDCGHVCCCFRCYQALPQPFCPICR).

As to quaternary structure, homooligomer.

The protein resides in the mitochondrion outer membrane. The enzyme catalyses S-ubiquitinyl-[E2 ubiquitin-conjugating enzyme]-L-cysteine + [acceptor protein]-L-lysine = [E2 ubiquitin-conjugating enzyme]-L-cysteine + N(6)-ubiquitinyl-[acceptor protein]-L-lysine.. It functions in the pathway protein modification; protein ubiquitination. E3 ubiquitin-protein ligase that plays a role in the control of mitochondrial morphology. Promotes mitochondrial fragmentation and influences mitochondrial localization. Inhibits cell growth. E3 ubiquitin ligases accept ubiquitin from an E2 ubiquitin-conjugating enzyme in the form of a thioester and then directly transfer the ubiquitin to targeted substrates. In Danio rerio (Zebrafish), this protein is Mitochondrial ubiquitin ligase activator of nfkb 1-A (mul1a).